We begin with the raw amino-acid sequence, 499 residues long: Importin subunit alpha-8 (499 aa).

One can recognise an IBB domain in the interval 1-57; it reads MATSKAPKERLKNYKYRGKEMSLPRQQRIASSLQLRKTRKDEQVLKRRNIDLFSSDM. 8 ARM repeats span residues 101–141, 144–183, 186–226, 229–268, 271–310, 313–352, 354–393, and 397–436; these read TPPL…NIAS, SEQT…NIAG, AEFR…NLCR, DPYP…YLTK, KEYI…NIVA, DEQT…NVAA, PRHQ…NIAT, and QDQL…YLLQ.

It belongs to the importin alpha family. In terms of assembly, binds to importin subunit beta-1/KPNB1 via the IBB domain; this complex dissociates in the presence of RAN-GTP. Shows a limited binding to the RB1 nuclear localization signal (NLS), but not to the SV40, nor NPM1 NLSs. Interacts with RSL1D1. In terms of tissue distribution, expressed predominantly in ovary. Isoform 1 is the predominant form.

Its subcellular location is the nucleus. Its function is as follows. Functions in nuclear protein import. This is Importin subunit alpha-8 (Kpna7) from Mus musculus (Mouse).